The following is a 647-amino-acid chain: tRNA uridine 5-carboxymethylaminomethyl modification enzyme MnmG (647 aa).

Residues 22 to 27, valine 134, and serine 189 contribute to the FAD site; that span reads GAGHAG. 283–297 lines the NAD(+) pocket; it reads GARYCPSIEDKIMRF. Glutamine 380 is a binding site for FAD.

This sequence belongs to the MnmG family. In terms of assembly, homodimer. Heterotetramer of two MnmE and two MnmG subunits. The cofactor is FAD.

The protein resides in the cytoplasm. Functionally, NAD-binding protein involved in the addition of a carboxymethylaminomethyl (cmnm) group at the wobble position (U34) of certain tRNAs, forming tRNA-cmnm(5)s(2)U34. The sequence is that of tRNA uridine 5-carboxymethylaminomethyl modification enzyme MnmG from Desulfotalea psychrophila (strain LSv54 / DSM 12343).